The sequence spans 49 residues: Putative DNA-directed RNA polymerase subunit omega (49 aa).

It belongs to the RNA polymerase subunit omega family.

The protein resides in the plastid. The protein localises to the chloroplast. It carries out the reaction RNA(n) + a ribonucleoside 5'-triphosphate = RNA(n+1) + diphosphate. Its function is as follows. May be involved in RNA polymerase activity. The protein is Putative DNA-directed RNA polymerase subunit omega (rpoZ) of Cyanidioschyzon merolae (strain NIES-3377 / 10D) (Unicellular red alga).